A 512-amino-acid chain; its full sequence is Cytochrome P450 monooxygenase poxM (512 aa).

A helical membrane pass occupies residues 15–35 (LLKGATIALSFFSLYLFGLVI). Cysteine 449 lines the heme pocket.

This sequence belongs to the cytochrome P450 family. Requires heme as cofactor.

The protein localises to the membrane. It participates in secondary metabolite biosynthesis. Cytochrome P450 monooxygenase; part of the gene cluster that mediates the biosynthesis of oxaleimides, cytotoxic compounds containing an unusual disubstituted succinimide moiety. The first step of the pathway is provided by the HR-PKS poxF that serves in a new mode of collaborative biosynthesis with the PKS-NRPS poxE, by providing the olefin containing amino acid substrate via the synthesis of an ACP-bound dec-4-enoate. The cytochrome P450 monooxygenase poxM-catalyzed oxidation at the alpha-position creates the enzyme-bound 2-hydroxydec-4-enoyl-ACP thioester, which may be prone to spontaneous hydrolysis to yield 2-hydroxydec-4-enoic acid due to increased electrophilicity of the carbonyl. 2-hydroxydec-4-enoic acid can then be further oxidized by poxM to yield the alpha-ketoacid 2-oxodec-4-enoicacid, which is reductively aminated by the aminotransferase poxL to yield (S,E)-2-aminodec-4-enoic acid. The Hybrid PKS-NRPS synthetase poxE then performs condensation between the octaketide product of its PKS modules and the amino group of (S,E)-2-aminodec-4-enoic acid which is activated and incorporated by the adenylation domain. The resulting aminoacyl product can be cyclized by the Diels-Alderase PoxQ and reductively released by the reductive (R) domain of poxE to yield an aldehyde intermediate. The released aldehyde is then substrate for a Knoevenagel condensation by the hydrolyase poxO followed by an oxidation at the 5-position of the pyrrolidone ring. The presence of the olefin from the amino acid building block allows for migration of the substituted allyl group to occur. This allylic transposition reaction takes place in a conjugate addition, semipinacol-like fashion to yield a succinimide intermediate. Iterative two-electron oxidations of the C7 methyl of the succinimide intermediate to the carboxylic acid can be catalyzed by one of two remaining cytochrome P450 monooxygenasess poxC or poxD to yield oxaleimide A. Subsequent oxidation yields the maleimide scaffold oxaleimide I. Both oxaleimide A and oxaleimide I can undergo oxidative modifications in the decalin ring to yield the series of products oxaleimides B to H. The sequence is that of Cytochrome P450 monooxygenase poxM from Penicillium oxalicum (strain 114-2 / CGMCC 5302) (Penicillium decumbens).